The primary structure comprises 185 residues: Adenine phosphoribosyltransferase (185 aa).

Belongs to the purine/pyrimidine phosphoribosyltransferase family. In terms of assembly, homodimer.

The protein localises to the cytoplasm. The catalysed reaction is AMP + diphosphate = 5-phospho-alpha-D-ribose 1-diphosphate + adenine. It functions in the pathway purine metabolism; AMP biosynthesis via salvage pathway; AMP from adenine: step 1/1. In terms of biological role, catalyzes a salvage reaction resulting in the formation of AMP, that is energically less costly than de novo synthesis. The chain is Adenine phosphoribosyltransferase from Arthrobacter sp. (strain FB24).